We begin with the raw amino-acid sequence, 360 residues long: MQGMALNQLLACLKWLGEFQVLACIPLKGSIHARDVADLTGVPETQLCRVVRLMATAGFLHEPRPGQIAHTVLSGAFVTDLSLLDAGMFLSETAAPVALHMATATERQSDLQASNSAYSVAFNTSQPFEAACVERSRLHRQWSAYSRCAGDAEDKTVELFGQLNWRSLGSATIVDSCAQSTDLVLELAKLYPSLHFVVQMNNAAAVQQEACRRPESEDVKRRMKIQERMPSAPQTVKDAAVYILRLPATLRPSAVQILAELRAHLGALRANSSATLILATPLLPEPGTLDPDSEARARVRDLARLQLTNETDLELSELIELVNGVHDSNGRFRVVSKLRSRDSAATAALGIKYQAVPTAP.

The region spanning 3-67 (GMALNQLLAC…GFLHEPRPGQ (65 aa)) is the HTH iclR-type domain. The segment at residues 33-52 (ARDVADLTGVPETQLCRVVR) is a DNA-binding region (H-T-H motif).

The protein localises to the nucleus. Transcriptional coactivator; part of the gene cluster that mediates the biosynthesis of an emodin derivative that may be involved in black Sigatoka disease of banana. With MYCFIDRAFT_198930, coregulates the production of the PKS8-1 cluster product. In Pseudocercospora fijiensis (strain CIRAD86) (Black leaf streak disease fungus), this protein is Transcriptional coactivator MYCFIDRAFT_190109.